Here is a 762-residue protein sequence, read N- to C-terminus: ABC-type oligopeptide transporter ABCB9 (762 aa).

Transmembrane regions (helical) follow at residues 7–27 (VVVT…IYAF), 47–67 (VLDL…ATIG), 84–104 (LVIT…LLLF), 116–136 (FWAL…LWGL), 181–201 (VAFL…ETFL), 221–241 (FTTA…AAGI), 315–335 (VFMF…FPII), and 412–432 (SGLT…HLVI). In terms of domain architecture, ABC transmembrane type-1 spans 184–467 (LVAASFFLIV…VGSVYSGLMQ (284 aa)). In terms of domain architecture, ABC transporter spans 500-736 (VDFENVTFTY…GGLYAKLVQR (237 aa)). 535 to 542 (GPSGSGKS) is a binding site for ATP.

The protein belongs to the ABC transporter superfamily. ABCB family. MHC peptide exporter (TC 3.A.1.209) subfamily. Homodimer. Interacts (via TMD0 region) with LAMP1; this interaction strongly stabilizes ABCB9 and protects ABCB9 against lysosomal degradation. Interacts (via TMD0 region) with LAMP2 (isoform LAMP-2B). Interacts (via TMD0) with YIF1B; this interaction allows (but is not essential) the ER-to-Golgi trafficking and strongly depends on a salt bridge within TMD0. In terms of tissue distribution, found in testis, particularly in the Sertoli cells of the seminiferous tubules. Also expressed in kidney, brain, heart, lung, spleen, thymus, intestine and testis. Higher expression detected in brain and testis than in thymus and intestine.

The protein localises to the lysosome membrane. The catalysed reaction is a [oligopeptide](in) + ATP + H2O = a [oligopeptide](out) + ADP + phosphate + H(+). Functionally, ATP-dependent low-affinity peptide transporter which translocates a broad spectrum of peptides from the cytosol to the lysosomal lumen for degradation. Displays a broad peptide length specificity from 6-mer up to at least 59-mer peptides with an optimum of 23-mers. Binds and transports smaller and larger peptides with the same affinity. Favors positively charged, aromatic or hydrophobic residues in the N- and C-terminal positions whereas negatively charged residues as well as asparagine and methionine are not favored. The sequence is that of ABC-type oligopeptide transporter ABCB9 from Rattus norvegicus (Rat).